Consider the following 234-residue polypeptide: (5-formylfuran-3-yl)methyl phosphate synthase (234 aa).

The active-site Schiff-base intermediate with substrate is Lys-27. The active-site Proton acceptor is the Lys-85.

The protein belongs to the MfnB family.

The enzyme catalyses 2 D-glyceraldehyde 3-phosphate = 4-(hydroxymethyl)-2-furancarboxaldehyde phosphate + phosphate + 2 H2O. It participates in cofactor biosynthesis; methanofuran biosynthesis. Functionally, catalyzes the formation of 4-(hydroxymethyl)-2-furancarboxaldehyde phosphate (4-HFC-P) from two molecules of glyceraldehyde-3-P (GA-3-P). The chain is (5-formylfuran-3-yl)methyl phosphate synthase from Methanosarcina barkeri (strain Fusaro / DSM 804).